A 333-amino-acid polypeptide reads, in one-letter code: Adenosine deaminase (333 aa).

Residues His12 and His14 each contribute to the Zn(2+) site. Substrate contacts are provided by His14, Asp16, and Gly170. A Zn(2+)-binding site is contributed by His197. The Proton donor role is filled by Glu200. Asp278 contributes to the Zn(2+) binding site. Residue Asp279 coordinates substrate.

It belongs to the metallo-dependent hydrolases superfamily. Adenosine and AMP deaminases family. Adenosine deaminase subfamily. Zn(2+) is required as a cofactor.

It carries out the reaction adenosine + H2O + H(+) = inosine + NH4(+). The enzyme catalyses 2'-deoxyadenosine + H2O + H(+) = 2'-deoxyinosine + NH4(+). Functionally, catalyzes the hydrolytic deamination of adenosine and 2-deoxyadenosine. This is Adenosine deaminase from Escherichia coli (strain SE11).